We begin with the raw amino-acid sequence, 345 residues long: Probable aldo-keto reductase 4 (345 aa).

Tyr63 (proton donor) is an active-site residue. His130 contacts substrate. 209 to 219 (SPLGRGFFASG) lines the NADP(+) pocket.

Belongs to the aldo/keto reductase family.

In Arabidopsis thaliana (Mouse-ear cress), this protein is Probable aldo-keto reductase 4.